The primary structure comprises 371 residues: Glycosyltransferase 8 domain-containing protein 1 (371 aa).

Over 1-5 the chain is Cytoplasmic; sequence MSFRK. Residues 6–26 traverse the membrane as a helical; Signal-anchor for type II membrane protein segment; sequence VTIIIWALAVILFLLALHHNF. Topologically, residues 27–371 are lumenal; it reads LSLSSLLRND…RRHMDTSNIK (345 aa). Residue Asn257 is glycosylated (N-linked (GlcNAc...) asparagine).

It belongs to the glycosyltransferase 8 family.

It localises to the membrane. This is Glycosyltransferase 8 domain-containing protein 1 (Glt8d1) from Rattus norvegicus (Rat).